The primary structure comprises 199 residues: MSEQNTNHESPEQNVAHDNIEHSDSILEETMKEFDPQHNSGEEMTIENEIDLDTFKARIAELEGEVKEAKEGTARANAEAYDAQKRMEQEADKSKKFALQKFARELLEIVDNLERAIENADANDPVAEGVQLTHKALLAVLHKNGIEVVDPQGEKFNADLHEAVDIDAEAEADTVGTVLQKGYSLNGRLLRPAMVRVGQ.

The disordered stretch occupies residues 1 to 27 (MSEQNTNHESPEQNVAHDNIEHSDSIL). Positions 18 to 27 (DNIEHSDSIL) are enriched in basic and acidic residues.

It belongs to the GrpE family. Homodimer.

It localises to the cytoplasm. Participates actively in the response to hyperosmotic and heat shock by preventing the aggregation of stress-denatured proteins, in association with DnaK and GrpE. It is the nucleotide exchange factor for DnaK and may function as a thermosensor. Unfolded proteins bind initially to DnaJ; upon interaction with the DnaJ-bound protein, DnaK hydrolyzes its bound ATP, resulting in the formation of a stable complex. GrpE releases ADP from DnaK; ATP binding to DnaK triggers the release of the substrate protein, thus completing the reaction cycle. Several rounds of ATP-dependent interactions between DnaJ, DnaK and GrpE are required for fully efficient folding. In Psychrobacter sp. (strain St1), this protein is Protein GrpE.